A 347-amino-acid polypeptide reads, in one-letter code: Chaperone protein DnaJ 1 (347 aa).

A J domain is found at 5–75 (DPHSLLGLSP…PAAAPHDAQA (71 aa)). Residues 68 to 77 (AAPHDAQAAD) show a composition bias toward low complexity. Residues 68–91 (AAPHDAQAADARPEPPPEAPPRGA) are disordered. The CR-type zinc finger occupies 107–181 (GGEKAFTIAD…CHGSGQARAA (75 aa)). C120, C123, C137, C140, C155, C158, C169, and C172 together coordinate Zn(2+). CXXCXGXG motif repeat units follow at residues 120 to 127 (CGACGGSG), 137 to 144 (CATCHGSG), 155 to 162 (CADCAGRG), and 169 to 176 (CGACHGSG).

This sequence belongs to the DnaJ family. Homodimer. Zn(2+) serves as cofactor.

The protein resides in the cytoplasm. Participates actively in the response to hyperosmotic and heat shock by preventing the aggregation of stress-denatured proteins and by disaggregating proteins, also in an autonomous, DnaK-independent fashion. Unfolded proteins bind initially to DnaJ; upon interaction with the DnaJ-bound protein, DnaK hydrolyzes its bound ATP, resulting in the formation of a stable complex. GrpE releases ADP from DnaK; ATP binding to DnaK triggers the release of the substrate protein, thus completing the reaction cycle. Several rounds of ATP-dependent interactions between DnaJ, DnaK and GrpE are required for fully efficient folding. Also involved, together with DnaK and GrpE, in the DNA replication of plasmids through activation of initiation proteins. The polypeptide is Chaperone protein DnaJ 1 (Aromatoleum aromaticum (strain DSM 19018 / LMG 30748 / EbN1) (Azoarcus sp. (strain EbN1))).